The sequence spans 146 residues: Large-conductance mechanosensitive channel (146 aa).

Transmembrane regions (helical) follow at residues 21–41 (VGII…ADLI), 44–64 (IIGL…LGDG), and 83–103 (GSFI…FLLV).

Belongs to the MscL family. In terms of assembly, homopentamer.

The protein resides in the cell inner membrane. In terms of biological role, channel that opens in response to stretch forces in the membrane lipid bilayer. May participate in the regulation of osmotic pressure changes within the cell. In Cereibacter sphaeroides (strain ATCC 17029 / ATH 2.4.9) (Rhodobacter sphaeroides), this protein is Large-conductance mechanosensitive channel.